The primary structure comprises 208 residues: MSETAPAASSTLVPAPVEKPSSKRRGKKPGLAPARKPRGFSVSKLIPEALSTSQERAGMSLAALKKALAAAGYDVEKNNSRIKLALKRLVNKGVLVQTKGTGASGSFKLSKKAASGNDKGKGKKSASAKAKKMGLPRASRSPKSSKTKAVKKPKATPTKASGSGRKTKGAKGVQQRKSPAKARAANPNSGKAKMVMQKTDLRKAAGRK.

Residues 1–12 are compositionally biased toward polar residues; sequence MSETAPAASSTL. The tract at residues 1–39 is disordered; that stretch reads MSETAPAASSTLVPAPVEKPSSKRRGKKPGLAPARKPRG. Position 9 is a phosphoserine (Ser9). The H15 domain maps to 38–111; sequence RGFSVSKLIP…GASGSFKLSK (74 aa). A Citrulline modification is found at Arg56. Residues 95 to 208 are disordered; that stretch reads LVQTKGTGAS…TDLRKAAGRK (114 aa). Positions 121-134 are enriched in basic residues; it reads KGKKSASAKAKKMG. Ser141 is subject to Phosphoserine. Positions 143 to 154 are enriched in basic residues; it reads KSSKTKAVKKPK. Residue Thr156 is modified to Phosphothreonine. Residues Ser163 and Ser178 each carry the phosphoserine modification. Residues 199–208 show a composition bias toward basic and acidic residues; sequence TDLRKAAGRK.

This sequence belongs to the histone H1/H5 family. In terms of processing, phosphorylated in early spermatids. Post-translationally, citrullination at Arg-56 (H1R54ci) by PADI4 takes place within the DNA-binding site of H1 and results in its displacement from chromatin and global chromatin decondensation, thereby promoting pluripotency and stem cell maintenance. In terms of tissue distribution, testis-specific.

The protein resides in the nucleus. Its subcellular location is the chromosome. Testis-specific histone H1 that forms less compacted chromatin compared to other H1 histone subtypes. Formation of more relaxed chromatin may be required to promote chromatin architecture required for proper chromosome regulation during meiosis, such as homologous recombination. Histones H1 act as linkers that bind to nucleosomes and compact polynucleosomes into a higher-order chromatin configuration. This Mus musculus (Mouse) protein is Histone H1t.